The chain runs to 552 residues: Urocanate hydratase (552 aa).

Residues 48–49 (GG), Q126, 172–174 (GMG), E192, R197, 238–239 (NA), 259–263 (QTSAH), 269–270 (YV), and Y318 each bind NAD(+). The active site involves C406. G488 contributes to the NAD(+) binding site.

Belongs to the urocanase family. It depends on NAD(+) as a cofactor.

It is found in the cytoplasm. It catalyses the reaction 4-imidazolone-5-propanoate = trans-urocanate + H2O. It functions in the pathway amino-acid degradation; L-histidine degradation into L-glutamate; N-formimidoyl-L-glutamate from L-histidine: step 2/3. Functionally, catalyzes the conversion of urocanate to 4-imidazolone-5-propionate. The chain is Urocanate hydratase from Herpetosiphon aurantiacus (strain ATCC 23779 / DSM 785 / 114-95).